The chain runs to 237 residues: Neural retina-specific leucine zipper protein (237 aa).

Residues lysine 20 and lysine 24 each participate in a glycyl lysine isopeptide (Lys-Gly) (interchain with G-Cter in SUMO) cross-link. The disordered stretch occupies residues 23–57; that stretch reads VKREPSEGRPGPPTASLGSTPYSSVPPSPTFSEPG. The tract at residues 30–93 is minimal transactivation domain (MTD); the sequence is GRPGPPTASL…AGEALGLSPE (64 aa). The basic motif stretch occupies residues 159 to 185; it reads RLKQRRRTLKNRGYAQACRSKRLQQRR. Positions 159-222 constitute a bZIP domain; it reads RLKQRRRTLK…DLYKARCDRL (64 aa). The leucine-zipper stretch occupies residues 187–208; the sequence is LEAERARLAAQLDALRAEVARL.

The protein belongs to the bZIP family. As to quaternary structure, interacts with FIZ1; this interaction represses transactivation. Interacts (via the leucine-zipper domain) with CRX. In terms of processing, phosphorylated. Post-translationally, disumoylated at Lys-20. Sumoylation modulates the transcriptional activity of NRL on RHO and NR2E3 promoters, and is required for normal rod differentiation. Expressed in the brain and the retina. Expressed strongly in rod and cone cells (at protein level).

It localises to the cytoplasm. It is found in the nucleus. In terms of biological role, acts as a transcriptional activator which regulates the expression of several rod-specific genes, including RHO and PDE6B. Also functions as a transcriptional coactivator, stimulating transcription mediated by the transcription factor CRX and NR2E3. Binds to the rhodopsin promoter in a sequence-specific manner. The sequence is that of Neural retina-specific leucine zipper protein (NRL) from Homo sapiens (Human).